A 90-amino-acid polypeptide reads, in one-letter code: Small ribosomal subunit protein bS16 (90 aa).

It belongs to the bacterial ribosomal protein bS16 family.

The chain is Small ribosomal subunit protein bS16 from Streptococcus pyogenes serotype M4 (strain MGAS10750).